A 332-amino-acid polypeptide reads, in one-letter code: Putative peptide import ATP-binding protein BMEII0206 (332 aa).

The ABC transporter domain maps to 11–261 (LEVSNLSVDF…PLHPYTEGLL (251 aa)). ATP is bound at residue 47-54 (GESGSGKS).

The protein belongs to the ABC transporter superfamily. As to quaternary structure, the complex is composed of two ATP-binding proteins (BMEII0205 and BMEII0206), two transmembrane proteins (BMEII0207/BMEII0208 and BMEII0209) and a solute-binding protein (BMEII0210).

It localises to the cell inner membrane. Its function is as follows. Probably part of an ABC transporter complex that could be involved in peptide import. Probably responsible for energy coupling to the transport system. The protein is Putative peptide import ATP-binding protein BMEII0206 of Brucella melitensis biotype 1 (strain ATCC 23456 / CCUG 17765 / NCTC 10094 / 16M).